The chain runs to 389 residues: MTSRKPLGRYRRIVIKIGSALLVDRKAGLKKAWLDAMCADISGLKAKGIDVLVVSSGAIALGRSVLDLPSGALKLEESQAAAAVGQIALARAWSESLSRGEIVAGQILLTLGDTEERRRYLNARATINQLLKIGAVPIINENDTVATSEIRYGDNDRLAARVATMTGADLLVLLSDIDGLYTAPPHLDPNATFLETISEITPEIEAMAGGAASELSRGGMRTKIDAGKIATTSGCAMIIASGKTDSPLSAIENGARSSWFAPSGTPVTARKTWIAGQLQPAGGLHVDDGAVTALGAGKSLLPAGVRSISGLFSRGDTVAIIGPAGREIARGLVSYDAEDARRIAGRKSAEIEAILGYPGRAAMVHRDDMVMTAQIGSKSERQKKDAAHA.

K16 contributes to the ATP binding site. Residues S56, D143, and N155 each coordinate substrate. 175-176 (SD) contributes to the ATP binding site. Residues 281-358 (AGGLHVDDGA…AEIEAILGYP (78 aa)) form the PUA domain.

The protein belongs to the glutamate 5-kinase family.

The protein resides in the cytoplasm. It carries out the reaction L-glutamate + ATP = L-glutamyl 5-phosphate + ADP. The protein operates within amino-acid biosynthesis; L-proline biosynthesis; L-glutamate 5-semialdehyde from L-glutamate: step 1/2. In terms of biological role, catalyzes the transfer of a phosphate group to glutamate to form L-glutamate 5-phosphate. In Rhizobium leguminosarum bv. trifolii (strain WSM2304), this protein is Glutamate 5-kinase.